We begin with the raw amino-acid sequence, 382 residues long: Serine/threonine-protein kinase US3 homolog (382 aa).

Residues 1-10 (MENKQCDHLT) are compositionally biased toward basic and acidic residues. A disordered region spans residues 1-75 (MENKQCDHLT…ASESDEDDDD (75 aa)). Residues 12–24 (WFSTTSDASESMD) show a composition bias toward polar residues. Residues 45–75 (ADEDLYSDISEGDLEYSDCDSASESDEDDDD) show a composition bias toward acidic residues. Residues 93–379 (YTVIKTLTPG…AEELLSYPMF (287 aa)) enclose the Protein kinase domain. ATP contacts are provided by residues 99–107 (LTPGSEGRV) and Lys-122. The Proton acceptor role is filled by Asp-207.

The protein belongs to the protein kinase superfamily. Ser/Thr protein kinase family. In terms of processing, phosphorylated by protein 49; this phosphorylation regulates subsequent phosphorylation of proteins 26 and 29 by US3 homolog. Autophosphorylated.

The protein localises to the host cytoplasm. It is found in the host nucleus. It catalyses the reaction L-seryl-[protein] + ATP = O-phospho-L-seryl-[protein] + ADP + H(+). It carries out the reaction L-threonyl-[protein] + ATP = O-phospho-L-threonyl-[protein] + ADP + H(+). In terms of biological role, multifunctional serine/threonine kinase that plays a role in several processes including egress of virus particles from the nucleus, modulation of the actin cytoskeleton and inhibition of apoptosis. Phosphorylates protein 26 and 29, two critical regulators of capsid budding from nucleus to endoplasmic reticulum, thereby facilitating virion egress. Modulates and redistributes host components of the nuclear envelope, including LMNA, emerin/EMD and the nuclear matrix protein MATR3. Phosphorylates envelope glycoprotein B (gB), probably to direct it to the cell surface. Promotes virus intracellular spread by restructuring host cell cytoskeleton. Blocks host apoptosis to extend cell survival and allow efficient viral replication. Promotes viral gene expression by phosphorylating host HDAC2 to reduce viral genome silencing. In Equine herpesvirus 1 (strain Ab4p) (EHV-1), this protein is Serine/threonine-protein kinase US3 homolog.